The following is a 1644-amino-acid chain: Peroxisome proliferator-activated receptor gamma coactivator-related protein 1 (1644 aa).

7 disordered regions span residues 1-61 (MAAR…DSSF), 170-249 (PERD…EVAG), 429-616 (LTPK…TSPV), 646-761 (AADP…PETP), 773-884 (SAPA…QPPG), 978-1074 (STVS…EGVV), and 1322-1507 (AAPP…NDHY). Over residues 12 to 22 (APPPTGGPGPD) the composition is skewed to pro residues. The span at 213–222 (SSPKLPSWRP) shows a compositional bias: low complexity. Ser232 bears the Phosphoserine mark. Residues 425–460 (IMESLTPKEPQSLPASASQGSQKVPRKGRKKKNKEQ) are necessary for interaction with CREB1 and NRF1 and for transcriptional coactivation. The segment covering 437–446 (LPASASQGSQ) has biased composition (polar residues). A compositionally biased stretch (basic residues) spans 448–457 (VPRKGRKKKN). Over residues 475 to 496 (SSRGQSTVSAEVNSQAGSSQKQ) the composition is skewed to polar residues. The span at 515 to 524 (RAWARAWAAA) shows a compositional bias: low complexity. Residue Ser541 is modified to Phosphoserine. Over residues 556-572 (ETSQANPTLSLNDSAQA) the composition is skewed to polar residues. Over residues 691–702 (DHPKVVSPEGKD) the composition is skewed to basic and acidic residues. The segment covering 811 to 821 (MVSTHSEQVSS) has biased composition (polar residues). Composition is skewed to pro residues over residues 828–864 (VRPP…PLLP) and 874–884 (RLPPPPLQPPG). Phosphoserine is present on residues Ser1059, Ser1393, and Ser1395. The necessary for interaction with CREB1 and NRF1 stretch occupies residues 1361–1432 (EASPCRSEMN…SSSSSVSSSS (72 aa)). Composition is skewed to low complexity over residues 1409 to 1433 (SRSV…SSSR) and 1453 to 1489 (SSCS…VSPC). The 77-residue stretch at 1523–1599 (RVVFIGKIPG…QPFDLCFGGR (77 aa)) folds into the RRM domain.

Interacts with CREB1 and NRF1. In terms of tissue distribution, expressed in liver, heart, skeletal muscle, kidney and white and brown adipose tissues.

The protein localises to the nucleus. Acts as a coactivator during transcriptional activation of nuclear genes related to mitochondrial biogenesis and cell growth. Involved in the transcription coactivation of CREB and NRF1 target genes. This is Peroxisome proliferator-activated receptor gamma coactivator-related protein 1 (Pprc1) from Mus musculus (Mouse).